We begin with the raw amino-acid sequence, 263 residues long: MTSPLPFVAVVPARLASTRLPNKPLADLGGKPMVVRVAERAREAGAQQVLVASDAQSVLDAVREHGFDAVLTRADHPSGTDRLAEVAAKLGFSDDTIVVNVQGDEPLIDPQLVCDVASHLAAHPSCAIATAAHPIHEAHEVFNPNYVKVVLDANGVALYFSRAPIPWSRDAYLPHWPNIAAMPAPTCPVYRHIGLYAYRARFLRTYPTLAQAPIEAAEQLEQLRAMWHGERIAVLVTEHAPEAGIDTPADLERVQALFRSRAK.

This sequence belongs to the KdsB family.

It localises to the cytoplasm. It catalyses the reaction 3-deoxy-alpha-D-manno-oct-2-ulosonate + CTP = CMP-3-deoxy-beta-D-manno-octulosonate + diphosphate. The protein operates within nucleotide-sugar biosynthesis; CMP-3-deoxy-D-manno-octulosonate biosynthesis; CMP-3-deoxy-D-manno-octulosonate from 3-deoxy-D-manno-octulosonate and CTP: step 1/1. It functions in the pathway bacterial outer membrane biogenesis; lipopolysaccharide biosynthesis. In terms of biological role, activates KDO (a required 8-carbon sugar) for incorporation into bacterial lipopolysaccharide in Gram-negative bacteria. The polypeptide is 3-deoxy-manno-octulosonate cytidylyltransferase (Burkholderia thailandensis (strain ATCC 700388 / DSM 13276 / CCUG 48851 / CIP 106301 / E264)).